The primary structure comprises 1027 residues: Protein translocase subunit SecA (1027 aa).

ATP-binding positions include Gln-143, 161–165, and Asp-661; that span reads GEGKT. The segment at 981–1027 is disordered; it reads EESGTSNADNAGDNGPQTVIAEKKPGRNDLCPCGSGKKYKNCHGQQP. 4 residues coordinate Zn(2+): Cys-1011, Cys-1013, Cys-1022, and His-1023.

It belongs to the SecA family. In terms of assembly, monomer and homodimer. Part of the essential Sec protein translocation apparatus which comprises SecA, SecYEG and auxiliary proteins SecDF. Other proteins may also be involved. Zn(2+) serves as cofactor.

The protein localises to the cell inner membrane. Its subcellular location is the cytoplasm. It catalyses the reaction ATP + H2O + cellular proteinSide 1 = ADP + phosphate + cellular proteinSide 2.. Its function is as follows. Part of the Sec protein translocase complex. Interacts with the SecYEG preprotein conducting channel. Has a central role in coupling the hydrolysis of ATP to the transfer of proteins into and across the cell membrane, serving as an ATP-driven molecular motor driving the stepwise translocation of polypeptide chains across the membrane. The sequence is that of Protein translocase subunit SecA from Chlorobium limicola (strain DSM 245 / NBRC 103803 / 6330).